We begin with the raw amino-acid sequence, 790 residues long: Kinesin-like protein KIF9 (790 aa).

The region spanning 6 to 340 (KVHAFVRVKP…LRFASRMKLV (335 aa)) is the Kinesin motor domain. ATP contacts are provided by residues 12–14 (RVK) and 93–100 (GQTGAGKT). Residues 342-380 (TEPAINEKYDAERMVKNLEKELALLKQELAIHDSLTNRT) adopt a coiled-coil conformation. The tract at residues 477–578 (QNFGLGVAPF…IRPDTPPSKP (102 aa)) is disordered. Over residues 525 to 534 (VSTSKTQLVP) the composition is skewed to polar residues. T530 carries the post-translational modification Phosphothreonine. Composition is skewed to basic and acidic residues over residues 537–552 (KDGD…RETS) and 561–570 (SPKEELRPIR). S546 is modified (phosphoserine). Residues 658 to 690 (LLILKLKDLKKQYRSEYQDLRDLRAEIQYCQHL) are a coiled coil.

It belongs to the TRAFAC class myosin-kinesin ATPase superfamily. Kinesin family. As to quaternary structure, interacts with HYDIN.

It localises to the cytoplasm. The protein resides in the cytoskeleton. It is found in the cell projection. Its subcellular location is the cilium. The protein localises to the flagellum. It localises to the flagellum axoneme. Its function is as follows. Essential for normal male fertility and for progressive motility of spermatozoa. The protein is Kinesin-like protein KIF9 (KIF9) of Homo sapiens (Human).